Consider the following 83-residue polypeptide: Gas vesicle protein G2 (83 aa).

The protein belongs to the gas vesicle GvpG family. As to quaternary structure, gvpF to GvpM interact with each other in vitro, and may form multi-subunit complex(es).

The protein localises to the gas vesicle. Its function is as follows. Proteins GvpF to GvpM might be involved in nucleating gas vesicle formation. A minor component of the gas vesicle. Gas vesicles are hollow, gas filled proteinaceous nanostructures found in several microbial planktonic microorganisms. They allow positioning of halobacteria at the optimal depth for growth in the poorly aerated, shallow brine pools of their habitat. In terms of biological role, expression of 2 c-vac DNA fragments containing 2 divergently transcribed regions (gvpE-gvpF-gvpG-gvpH-gvpI-gvpJ-gvpK-gvpL-gvpM and gvpA-gvpC-gvpN-gvpO) allows H.volcanii to produce gas vesicles. The chain is Gas vesicle protein G2 from Halobacterium salinarum (strain ATCC 700922 / JCM 11081 / NRC-1) (Halobacterium halobium).